The sequence spans 408 residues: L,D-transpeptidase 2 (408 aa).

The signal sequence occupies residues 1 to 34 (MPKVGIAAQAGRTRVRRAWLTALMMTAVMIGAVA). Cys35 carries N-palmitoyl cysteine lipidation. Cys35 is lipidated: S-diacylglycerol cysteine. 3 residues coordinate Ca(2+): Asp232, Glu235, and Gly236. The 126-residue stretch at 253–378 (VIATADDNTK…VKRGDIVEVV (126 aa)) folds into the L,D-TPase catalytic domain. Substrate contacts are provided by residues Tyr318 and 331–332 (SG). His336 acts as the Proton donor/acceptor in catalysis. Cys354 serves as the catalytic Nucleophile. Residue Asn356 coordinates substrate.

As to quaternary structure, monomer.

It localises to the cell membrane. The protein operates within cell wall biogenesis; peptidoglycan biosynthesis. Is irreversibly inactivated by the beta-lactams carbapenems via the formation of a covalent adduct resulting from acylation of the catalytic Cys. Its function is as follows. Generates 3-&gt;3 cross-links in peptidoglycan, catalyzing the cleavage of the mDap(3)-D-Ala(4) bond of a tetrapeptide donor stem and the formation of a bond between the carbonyl of mDap(3) of the donor stem and the side chain of mDap(3) of the acceptor stem. Is specific for donor substrates containing a stem tetrapeptide since it cannot use pentapeptide stems. Is essential for virulence in a mouse model of acute infection. In Mycobacterium tuberculosis (strain CDC 1551 / Oshkosh), this protein is L,D-transpeptidase 2 (ldtB).